Consider the following 307-residue polypeptide: Junctional adhesion molecule 2A (307 aa).

Positions 1 to 18 are cleaved as a signal peptide; the sequence is MLVCVSLLILIHSVPVSP. Positions 19-112 constitute an Ig-like V-type domain; sequence VTVSSRNPKV…EVSAPSDSIS (94 aa). Topologically, residues 19-226 are extracellular; sequence VTVSSRNPKV…FQTHDLNVAA (208 aa). Disulfide bonds link Cys40-Cys102 and Cys147-Cys197. The 100-residue stretch at 126–225 folds into the Ig-like C2-type domain; sequence PQTPSCDVPS…TFQTHDLNVA (100 aa). The helical transmembrane segment at 227-247 threads the bilayer; the sequence is VVSAVVLVCVILFLCAFGVCL. Topologically, residues 248–307 are cytoplasmic; that stretch reads AHRQGYFSRHRGRSFWIPHCHGVTHISSQNLNPSEHTQHSGYSHPPKEPQDFKHTQSFML. Polar residues predominate over residues 278–288; it reads LNPSEHTQHSG. Residues 278 to 307 are disordered; that stretch reads LNPSEHTQHSGYSHPPKEPQDFKHTQSFML. Basic and acidic residues predominate over residues 292-301; sequence PPKEPQDFKH.

It belongs to the immunoglobulin superfamily.

It is found in the cell membrane. The protein localises to the cell junction. Its subcellular location is the tight junction. Functionally, junctional adhesion protein that mediates heterotypic cell-cell interactions to regulate different cellular processes. During myogenesis, it is involved in myocyte fusion through the binding of jam3b on neighboring myocytes. In Danio rerio (Zebrafish), this protein is Junctional adhesion molecule 2A (jam2a).